Consider the following 101-residue polypeptide: Small ribosomal subunit protein uS14 (101 aa).

It belongs to the universal ribosomal protein uS14 family. Part of the 30S ribosomal subunit. Contacts proteins S3 and S10.

Functionally, binds 16S rRNA, required for the assembly of 30S particles and may also be responsible for determining the conformation of the 16S rRNA at the A site. The sequence is that of Small ribosomal subunit protein uS14 from Ehrlichia ruminantium (strain Welgevonden).